The sequence spans 325 residues: Ribosomal RNA small subunit methyltransferase H (325 aa).

S-adenosyl-L-methionine is bound by residues 41-43 (GGH), Asp-60, Tyr-87, Asp-108, and Gln-115. Positions 295–325 (DDDEKAANPRAAPVRLRAAERTRASEDRRGS) are disordered. A compositionally biased stretch (basic and acidic residues) spans 311–325 (RAAERTRASEDRRGS).

It belongs to the methyltransferase superfamily. RsmH family.

The protein localises to the cytoplasm. The enzyme catalyses cytidine(1402) in 16S rRNA + S-adenosyl-L-methionine = N(4)-methylcytidine(1402) in 16S rRNA + S-adenosyl-L-homocysteine + H(+). Functionally, specifically methylates the N4 position of cytidine in position 1402 (C1402) of 16S rRNA. This Leifsonia xyli subsp. xyli (strain CTCB07) protein is Ribosomal RNA small subunit methyltransferase H.